We begin with the raw amino-acid sequence, 151 residues long: Transcriptional repressor NrdR (151 aa).

The interval 1–24 (MRCPKCQHNGTRVLDSRPSDESRS) is disordered. The segment at 3–34 (CPKCQHNGTRVLDSRPSDESRSIKRRRECEKC) is a zinc-finger region. The segment covering 14–24 (LDSRPSDESRS) has biased composition (basic and acidic residues). The 91-residue stretch at 49–139 (LLIIKKDGMR…VYRQFKDINV (91 aa)) folds into the ATP-cone domain.

This sequence belongs to the NrdR family. The cofactor is Zn(2+).

Functionally, negatively regulates transcription of bacterial ribonucleotide reductase nrd genes and operons by binding to NrdR-boxes. This Shouchella clausii (strain KSM-K16) (Alkalihalobacillus clausii) protein is Transcriptional repressor NrdR.